A 462-amino-acid polypeptide reads, in one-letter code: Neuronal acetylcholine receptor subunit non-alpha-2 (462 aa).

An N-terminal signal peptide occupies residues 1-30 (MTLAVIGLFTLFTSIIAITPAREFVSLAER). Over 31–234 (EDALLRELFQ…ITYSFILKRL (204 aa)) the chain is Extracellular. N-linked (GlcNAc...) asparagine glycosylation is found at N53 and N168. A disulfide bond links C155 and C169. 3 consecutive transmembrane segments (helical) span residues 235-259 (PLFYTLFLIIPCLGLSFLTVLVFYL), 267-284 (VSLSTSVLVSLTVFLLVI), and 301-322 (YLLFIMIFVTLSIIVTIFVINV). The Cytoplasmic segment spans residues 323-428 (HHRSSATYHP…WKFVAQVLDR (106 aa)). A compositionally biased stretch (basic and acidic residues) spans 362–372 (ELEPHSPDLKP). The segment at 362 to 384 (ELEPHSPDLKPRNKKGPPGPEGE) is disordered. A helical transmembrane segment spans residues 429-446 (IFLWTFLTVSVLGTILIF).

Belongs to the ligand-gated ion channel (TC 1.A.9) family. Acetylcholine receptor (TC 1.A.9.1) subfamily. As to quaternary structure, neuronal AChR seems to be composed of two different type of subunits: alpha and beta.

It is found in the postsynaptic cell membrane. Its subcellular location is the cell membrane. Its function is as follows. After binding acetylcholine, the AChR responds by an extensive change in conformation that affects all subunits and leads to opening of an ion-conducting channel across the plasma membrane. This chain is Neuronal acetylcholine receptor subunit non-alpha-2, found in Carassius auratus (Goldfish).